The chain runs to 75 residues: Acylphosphatase-like protein MJ1405 (75 aa).

The Acylphosphatase-like domain occupies T8–K75.

This chain is Acylphosphatase-like protein MJ1405, found in Methanocaldococcus jannaschii (strain ATCC 43067 / DSM 2661 / JAL-1 / JCM 10045 / NBRC 100440) (Methanococcus jannaschii).